The sequence spans 68 residues: uncharacterized protein (68 aa).

A disordered region spans residues 1–42; that stretch reads MHLCQNGHYYKPHRASAEKVPYLKKKKKNSRNEGKAKKKNEK.

This is an uncharacterized protein from Saccharomyces cerevisiae (strain ATCC 204508 / S288c) (Baker's yeast).